The chain runs to 1083 residues: MPTNFTVVPVEARADGAGDEAAERTEEPESPESVDQTSPTPGDGNPRENSPFINNVEVERESYFEGKNMALFEEEMDSNPMVSSLLNKLANYTNLSQGVVEHEEDEDSRRREVKAPRMGTFIGVYLPCLQNILGVILFLRLTWIVGAAGVMESFLIVAMCCTCTMLTAISMSAIATNGVVPAGGSYYMISRSLGPEFGGAVGLCFYLGTTFAGAMYILGTIEIFLTYISPSAAIFQAETADGEAAALLNNMRVYGSCALALMAVVVFVGVKYVNKLALVFLACVVLSILAIYAGVIKTAFAPPDIPVCLLGNRTLANRNFDTCAKMQVVSNGTVTTALWRLFCNGSSLGATCDEYFAQNNVTEIQGIPGVASGVFLDNLWSTYSDKGAFVEKKGVSSVPVSEESRPGGLPYVLTDIMTYFTMLVGIYFPSVTGIMAGSNRSGDLKDAQKSIPTGTILAIVTTSFIYLSCIVLFGACIEGVVLRDKFGEALQGNLVIGMLAWPSPWVIVIGSFFSTCGAGLQSLTGAPRLLQAIARDGIIPFLQVFGHGKANGEPTWALLLTALICETGILIASLDSVAPILSMFFLMCYMFVNLACAVQTLLRTPNWRPRFKFYHWTLSFLGMSLCLALMFICSWYYALFAMLIAGCIYKYIEYRGAEKEWGDGIRGLSLNAARYALLRVEHGPPHTKNWRPQVLVMLNLDSEQCVKHPRLLSFTSQLKAGKGLTIVGSVLEGTYLDKHVEAQRAEENIRSLMSAEKTKGFCQLVVSSNLRDGASHLIQSAGLGGMKHNTVLMAWPEAWKEADNPFSWKNFVDTVRDTTAAHQALLVAKNIDLFPQNQERFSDGNIDVWWIVHDGGMLMLLPFLLRQHKVWRKCRMRIFTVAQVDDNSIQMKKDLQMFLYHLRISAEVEVVEMVENDISAFTYEKTLMMEQRSQMLKQMQLSKNEREREAQLIHDRNTASHTTATARTQAPPTPDKVQMTWTKEKLIAEKHRNKDTGPSGFKDLFSLKPDQSNVRRMHTAVKLNGVVLNKSQDAQLVLLNMPGPPKSRQGDENYMEFLEVLTEGLNRVLLVRGGGREVITIYS.

Residues 1–55 are disordered; that stretch reads MPTNFTVVPVEARADGAGDEAAERTEEPESPESVDQTSPTPGDGNPRENSPFINN. The Cytoplasmic segment spans residues 1–119; the sequence is MPTNFTVVPV…RREVKAPRMG (119 aa). The segment covering 12 to 27 has biased composition (basic and acidic residues); sequence ARADGAGDEAAERTEE. A phosphoserine mark is found at serine 30 and serine 33. Threonine 37 is modified (phosphothreonine). A phosphoserine mark is found at serine 50 and serine 62. The chain crosses the membrane as a discontinuously helical span at residues 120-142; sequence TFIGVYLPCLQNILGVILFLRLT. 2 residues coordinate K(+): asparagine 131 and isoleucine 132. Chloride is bound at residue valine 135. The Extracellular portion of the chain corresponds to 143 to 149; the sequence is WIVGAAG. A helical transmembrane segment spans residues 150–172; the sequence is VMESFLIVAMCCTCTMLTAISMS. Over 173–196 the chain is Cytoplasmic; sequence AIATNGVVPAGGSYYMISRSLGPE. The helical transmembrane segment at 197–225 threads the bilayer; it reads FGGAVGLCFYLGTTFAGAMYILGTIEIFL. At 226–249 the chain is on the extracellular side; sequence TYISPSAAIFQAETADGEAAALLN. 2 helical membrane passes run 250–271 and 272–300; these read NMRV…VGVK and YVNK…KTAF. Residues 301–419 lie on the Extracellular side of the membrane; it reads APPDIPVCLL…PYVLTDIMTY (119 aa). N-linked (GlcNAc...) (high mannose) asparagine glycosylation occurs at asparagine 312. N-linked (GlcNAc...) (complex) asparagine glycans are attached at residues asparagine 331 and asparagine 344. Asparagine 360 is a glycosylation site (N-linked (GlcNAc...) (high mannose) asparagine). Residues 420–440 form a helical membrane-spanning segment; sequence FTMLVGIYFPSVTGIMAGSNR. The K(+) site is built by proline 429 and threonine 432. Proline 429 serves as a coordination point for chloride. Chloride-binding residues include glycine 433 and isoleucine 434. Residues 441 to 450 lie on the Cytoplasmic side of the membrane; it reads SGDLKDAQKS. A helical membrane pass occupies residues 451–473; sequence IPTGTILAIVTTSFIYLSCIVLF. Over 474–504 the chain is Extracellular; sequence GACIEGVVLRDKFGEALQGNLVIGMLAWPSP. A helical transmembrane segment spans residues 505–531; that stretch reads WVIVIGSFFSTCGAGLQSLTGAPRLLQ. At 532 to 554 the chain is on the cytoplasmic side; that stretch reads AIARDGIIPFLQVFGHGKANGEP. Transmembrane regions (helical) follow at residues 555 to 573 and 574 to 598; these read TWAL…LIAS and LDSV…ACAV. Tyrosine 589 is a chloride binding site. Over 599–612 the chain is Cytoplasmic; sequence QTLLRTPNWRPRFK. 2 helical membrane-spanning segments follow: residues 613–635 and 636–651; these read FYHW…ICSW and YYAL…IYKY. Residues 652–1083 lie on the Cytoplasmic side of the membrane; it reads IEYRGAEKEW…GGREVITIYS (432 aa). The segment at 664–680 is scissor helix; it reads GIRGLSLNAARYALLRV. 2 positions are modified to phosphothreonine: threonine 973 and threonine 980.

It belongs to the SLC12A transporter family. K/Cl co-transporter subfamily. Homodimer; adopts a domain-swap conformation at the scissor helices connecting the transmembrane domain and C-terminal domain. Heterodimer with K-Cl cotransporter SLC12A5. Post-translationally, glycosylation at Asn-331 and Asn-344 is required for proper trafficking to the cell surface, and augments protein stability. As to expression, detected in proximal tubules in the kidney, in particular in basolateral membranes of intercalated cells in the cortical collecting duct.

It localises to the cell membrane. The enzyme catalyses K(+)(in) + chloride(in) = K(+)(out) + chloride(out). Activated by N-ethylmaleimide (NEM). Inhibited by furosemide, DIDS and bumetanide. The inhibition is much stronger in the presence of 50 mM K(+) in the uptake medium. Inhibited by DIOA. Inhibited by WNK3. Mediates electroneutral potassium-chloride cotransport when activated by cell swelling. May mediate K(+) uptake into Deiters' cells in the cochlea and contribute to K(+) recycling in the inner ear. Important for the survival of cochlear outer and inner hair cells and the maintenance of the organ of Corti. May be required for basolateral Cl(-) extrusion in the kidney and contribute to renal acidification. This chain is Solute carrier family 12 member 7 (Slc12a7), found in Mus musculus (Mouse).